Reading from the N-terminus, the 290-residue chain is Diaminopimelate epimerase (290 aa).

Substrate-binding residues include asparagine 14 and asparagine 67. Residue cysteine 76 is the Proton donor of the active site. Substrate-binding positions include 77–78, asparagine 166, asparagine 199, and 217–218; these read GN and ER. Residue cysteine 226 is the Proton acceptor of the active site. 227–228 is a substrate binding site; sequence GT.

Belongs to the diaminopimelate epimerase family. Homodimer.

It localises to the cytoplasm. It catalyses the reaction (2S,6S)-2,6-diaminopimelate = meso-2,6-diaminopimelate. It participates in amino-acid biosynthesis; L-lysine biosynthesis via DAP pathway; DL-2,6-diaminopimelate from LL-2,6-diaminopimelate: step 1/1. Its function is as follows. Catalyzes the stereoinversion of LL-2,6-diaminopimelate (L,L-DAP) to meso-diaminopimelate (meso-DAP), a precursor of L-lysine and an essential component of the bacterial peptidoglycan. The chain is Diaminopimelate epimerase from Geobacillus kaustophilus (strain HTA426).